Reading from the N-terminus, the 554-residue chain is Afadin- and alpha-actinin-binding protein A (554 aa).

Coiled-coil stretches lie at residues Leu122–Lys287 and Glu359–Leu449. Residues Leu508–Ser528 form a disordered region.

Belongs to the ADIP family. In terms of assembly, interacts with WRAP73.

Its subcellular location is the cell junction. The protein localises to the adherens junction. The protein resides in the cytoplasm. It localises to the cytoskeleton. It is found in the microtubule organizing center. Its subcellular location is the centrosome. The protein localises to the centriolar satellite. Belongs to an adhesion system, which plays a role in the organization of homotypic, interneuronal and heterotypic cell-cell adherens junctions (AJs). Involved in cell movement. Acts as a centrosome maturation factor, probably by maintaining the integrity of the pericentriolar material and proper microtubule nucleation at mitotic spindle poles. The function seems to implicate at least in part WRAP73; the SSX2IP:WRAP73 complex is proposed to act as regulator of spindle anchoring at the mitotic centrosome. In Xenopus laevis (African clawed frog), this protein is Afadin- and alpha-actinin-binding protein A (ssx2ip-a).